We begin with the raw amino-acid sequence, 564 residues long: Proline--tRNA ligase (564 aa).

It belongs to the class-II aminoacyl-tRNA synthetase family. ProS type 1 subfamily. As to quaternary structure, homodimer.

Its subcellular location is the cytoplasm. The enzyme catalyses tRNA(Pro) + L-proline + ATP = L-prolyl-tRNA(Pro) + AMP + diphosphate. In terms of biological role, catalyzes the attachment of proline to tRNA(Pro) in a two-step reaction: proline is first activated by ATP to form Pro-AMP and then transferred to the acceptor end of tRNA(Pro). As ProRS can inadvertently accommodate and process non-cognate amino acids such as alanine and cysteine, to avoid such errors it has two additional distinct editing activities against alanine. One activity is designated as 'pretransfer' editing and involves the tRNA(Pro)-independent hydrolysis of activated Ala-AMP. The other activity is designated 'posttransfer' editing and involves deacylation of mischarged Ala-tRNA(Pro). The misacylated Cys-tRNA(Pro) is not edited by ProRS. The sequence is that of Proline--tRNA ligase from Xanthomonas oryzae pv. oryzae (strain KACC10331 / KXO85).